Reading from the N-terminus, the 119-residue chain is Phosphoribosyl-AMP cyclohydrolase (119 aa).

Asp77 lines the Mg(2+) pocket. Cys78 provides a ligand contact to Zn(2+). Asp79 and Asp81 together coordinate Mg(2+). Zn(2+)-binding residues include Cys94 and Cys101.

The protein belongs to the PRA-CH family. Homodimer. Mg(2+) is required as a cofactor. It depends on Zn(2+) as a cofactor.

It localises to the cytoplasm. The catalysed reaction is 1-(5-phospho-beta-D-ribosyl)-5'-AMP + H2O = 1-(5-phospho-beta-D-ribosyl)-5-[(5-phospho-beta-D-ribosylamino)methylideneamino]imidazole-4-carboxamide. It participates in amino-acid biosynthesis; L-histidine biosynthesis; L-histidine from 5-phospho-alpha-D-ribose 1-diphosphate: step 3/9. Its function is as follows. Catalyzes the hydrolysis of the adenine ring of phosphoribosyl-AMP. This is Phosphoribosyl-AMP cyclohydrolase from Dinoroseobacter shibae (strain DSM 16493 / NCIMB 14021 / DFL 12).